We begin with the raw amino-acid sequence, 379 residues long: Galactose-1-phosphate uridylyltransferase (379 aa).

Positions methionine 1–glutamine 10 are enriched in basic and acidic residues. The disordered stretch occupies residues methionine 1 to methionine 20. Cysteine 75 provides a ligand contact to Zn(2+). Residues alanine 81, asparagine 97–aspartate 98, and asparagine 173 contribute to the UDP-alpha-D-glucose site. Histidine 184 contributes to the Zn(2+) binding site. Histidine 186 acts as the Tele-UMP-histidine intermediate in catalysis. Glutamine 188 serves as a coordination point for UDP-alpha-D-glucose. Zn(2+) contacts are provided by glutamate 202, histidine 301, histidine 319, and histidine 321. Residues lysine 334 to valine 337 and tyrosine 339 to glutamate 340 contribute to the UDP-alpha-D-glucose site.

It belongs to the galactose-1-phosphate uridylyltransferase type 1 family. As to quaternary structure, homodimer. The cofactor is Zn(2+).

It catalyses the reaction alpha-D-galactose 1-phosphate + UDP-alpha-D-glucose = alpha-D-glucose 1-phosphate + UDP-alpha-D-galactose. It functions in the pathway carbohydrate metabolism; galactose metabolism. In terms of biological role, plays an important role in galactose metabolism. In Mus musculus (Mouse), this protein is Galactose-1-phosphate uridylyltransferase (Galt).